The following is a 273-amino-acid chain: Large ribosomal subunit protein uL2 (273 aa).

2 disordered regions span residues 28–53 (KPFA…TTRH) and 221–273 (RGTA…RRSK). The span at 39–48 (KSGGRNNNGR) shows a compositional bias: low complexity. Lysine 242 is subject to N6-acetyllysine.

It belongs to the universal ribosomal protein uL2 family. As to quaternary structure, part of the 50S ribosomal subunit. Forms a bridge to the 30S subunit in the 70S ribosome.

Its function is as follows. One of the primary rRNA binding proteins. Required for association of the 30S and 50S subunits to form the 70S ribosome, for tRNA binding and peptide bond formation. It has been suggested to have peptidyltransferase activity; this is somewhat controversial. Makes several contacts with the 16S rRNA in the 70S ribosome. This is Large ribosomal subunit protein uL2 from Escherichia coli (strain SE11).